The chain runs to 688 residues: Translation initiation factor IF-2 (688 aa).

Over residues 50 to 62 the composition is skewed to basic and acidic residues; it reads LLSGKEKSEKTKE. Positions 50–95 are disordered; sequence LLSGKEKSEKTKEEDDEIETTAKNPIKESINNKKSNKRDDKNEKVN. Residues 72-82 are compositionally biased toward low complexity; it reads KNPIKESINNK. Residues 86–95 show a composition bias toward basic and acidic residues; sequence KRDDKNEKVN. The region spanning 187–354 is the tr-type G domain; it reads KRSPIITVMG…MILLSSEILE (168 aa). The G1 stretch occupies residues 196–203; the sequence is GHVDHGKT. Residue 196–203 participates in GTP binding; sequence GHVDHGKT. Residues 221-225 are G2; sequence GITQH. Residues 242–245 form a G3 region; the sequence is DTPG. Residues 242-246 and 296-299 contribute to the GTP site; these read DTPGH and NKID. A G4 region spans residues 296-299; the sequence is NKID. Residues 332–334 are G5; the sequence is SAH.

The protein belongs to the TRAFAC class translation factor GTPase superfamily. Classic translation factor GTPase family. IF-2 subfamily.

It is found in the cytoplasm. Functionally, one of the essential components for the initiation of protein synthesis. Protects formylmethionyl-tRNA from spontaneous hydrolysis and promotes its binding to the 30S ribosomal subunits. Also involved in the hydrolysis of GTP during the formation of the 70S ribosomal complex. This Clostridium botulinum (strain Langeland / NCTC 10281 / Type F) protein is Translation initiation factor IF-2.